Here is a 147-residue protein sequence, read N- to C-terminus: UPF0735 ACT domain-containing protein GK2605 (147 aa).

Residues 69-144 (TLFFHLEDRS…FVEKVEIVGS (76 aa)) enclose the ACT domain.

The protein belongs to the UPF0735 family.

This Geobacillus kaustophilus (strain HTA426) protein is UPF0735 ACT domain-containing protein GK2605.